We begin with the raw amino-acid sequence, 225 residues long: MVQSCSAYGCKNRYQKDRNISFHKFPLARPEVCVQWVSAMSRRNFKPTKYSNICSQHFTSDCFKQECNNRVLKDNAVPSLFTLQTQDPFSADVCFPLNVCATAEPLSECFPEQCGLPDGQEAGAVSCPEQCVPPGGQEAGAVSCDHNYTLEDCVQQKRRVQRLQEQMEKLRRRMKTLQQKCRRQERQLERLRANRGPAPLGDRYVILPRELYEELQGVETIGAVH.

Residues 5–57 form a THAP-type zinc finger; that stretch reads CSAYGCKNRYQKDRNISFHKFPLARPEVCVQWVSAMSRRNFKPTKYSNICSQH. The stretch at 149 to 196 forms a coiled coil; that stretch reads TLEDCVQQKRRVQRLQEQMEKLRRRMKTLQQKCRRQERQLERLRANRG.

It belongs to the THAP1 family.

Its subcellular location is the nucleus. The protein localises to the nucleoplasm. In terms of biological role, DNA-binding transcription regulator that regulates endothelial cell proliferation and G1/S cell-cycle progression. Specifically binds the 5'-[AT]NTNN[GT]GGCA[AGT]-3' core DNA sequence and acts by modulating expression of pRB-E2F cell-cycle target genes. This Danio rerio (Zebrafish) protein is THAP domain-containing protein 1 (thap1).